The sequence spans 223 residues: Deoxyribose-phosphate aldolase (223 aa).

Residue Asp-91 is the Proton donor/acceptor of the active site. Lys-154 (schiff-base intermediate with acetaldehyde) is an active-site residue. Catalysis depends on Lys-183, which acts as the Proton donor/acceptor.

Belongs to the DeoC/FbaB aldolase family. DeoC type 1 subfamily.

The protein localises to the cytoplasm. It catalyses the reaction 2-deoxy-D-ribose 5-phosphate = D-glyceraldehyde 3-phosphate + acetaldehyde. It functions in the pathway carbohydrate degradation; 2-deoxy-D-ribose 1-phosphate degradation; D-glyceraldehyde 3-phosphate and acetaldehyde from 2-deoxy-alpha-D-ribose 1-phosphate: step 2/2. Catalyzes a reversible aldol reaction between acetaldehyde and D-glyceraldehyde 3-phosphate to generate 2-deoxy-D-ribose 5-phosphate. This Lysinibacillus sphaericus (strain C3-41) protein is Deoxyribose-phosphate aldolase.